The sequence spans 255 residues: MELNLDIYVDYKDKRYKAEGYYGPSVGDLVLIFMDMELEGATVQEVARIEGSEIHLRTPNGNEPSYRYMGQYLILKPYGSSDPRGDILVHEDVQYVRVDAQAMPGDLIEALEPNKLPFSGKRFKYRPAVLEVEYVLTKDEQVLQLENGKSYSGAYRVLIPRMGVLPPKTHIYTTHKHVFMEDVFVLGNSYELSSPNDVEMTPIHAVFTGFSKNRDEAIFVNPYYNDDGVTGTMITVSDLLTGKWDITPLVPKKGV.

The sequence is that of Putative gene 39 protein (39) from Bacillus phage SP01 (Bacteriophage SP01).